The sequence spans 78 residues: Acyl carrier protein (78 aa).

Residues 2 to 77 (SNIEQQVKKI…LAIDYINAHN (76 aa)) enclose the Carrier domain. At S37 the chain carries O-(pantetheine 4'-phosphoryl)serine.

It belongs to the acyl carrier protein (ACP) family. 4'-phosphopantetheine is transferred from CoA to a specific serine of apo-ACP by AcpS. This modification is essential for activity because fatty acids are bound in thioester linkage to the sulfhydryl of the prosthetic group.

It localises to the cytoplasm. The protein operates within lipid metabolism; fatty acid biosynthesis. Carrier of the growing fatty acid chain in fatty acid biosynthesis. The chain is Acyl carrier protein from Neisseria gonorrhoeae (strain ATCC 700825 / FA 1090).